Here is a 365-residue protein sequence, read N- to C-terminus: Chorismate synthase (365 aa).

R47 lines the NADP(+) pocket. FMN is bound by residues 124 to 126 (RAS), G287, 302 to 306 (KPTAT), and R328. Residues 266-290 (FIKSDDSSKLRTTSNNSGGIQGGIS) form a disordered region.

It belongs to the chorismate synthase family. In terms of assembly, homotetramer. Requires FMNH2 as cofactor.

The enzyme catalyses 5-O-(1-carboxyvinyl)-3-phosphoshikimate = chorismate + phosphate. It functions in the pathway metabolic intermediate biosynthesis; chorismate biosynthesis; chorismate from D-erythrose 4-phosphate and phosphoenolpyruvate: step 7/7. Catalyzes the anti-1,4-elimination of the C-3 phosphate and the C-6 proR hydrogen from 5-enolpyruvylshikimate-3-phosphate (EPSP) to yield chorismate, which is the branch point compound that serves as the starting substrate for the three terminal pathways of aromatic amino acid biosynthesis. This reaction introduces a second double bond into the aromatic ring system. The protein is Chorismate synthase of Prochlorococcus marinus (strain MIT 9301).